The primary structure comprises 64 residues: Large ribosomal subunit protein bL33 (64 aa).

Belongs to the bacterial ribosomal protein bL33 family.

The chain is Large ribosomal subunit protein bL33 from Picosynechococcus sp. (strain ATCC 27264 / PCC 7002 / PR-6) (Agmenellum quadruplicatum).